Here is a 372-residue protein sequence, read N- to C-terminus: Gustatory and pheromone receptor 39a, isoform B (372 aa).

Residues 1–32 (MGTRNRKLLFFLHYQRYLGLTNLDFSKSLHIY) are Cytoplasmic-facing. Residues 33 to 53 (WLHGTWSSTAIQIVVVGVFMA) form a helical membrane-spanning segment. The Extracellular portion of the chain corresponds to 54–59 (ALLGAL). A helical transmembrane segment spans residues 60-80 (AESLYYMETKSQTGNTFDNAV). At 81–122 (ILTTSVTQLLANLWLRSQQKSQVNLLQRLSQVVELLQFEPYA) the chain is on the cytoplasmic side. Residues 123–143 (VPQFRWLYRIWLLVCLIYGAM) form a helical membrane-spanning segment. The Extracellular segment spans residues 144–147 (VTHF). A helical transmembrane segment spans residues 148-168 (GINWLTTMQISRVLTLIGFVY). The Cytoplasmic portion of the chain corresponds to 169–224 (RCVLANFQFTCYTGMVVILKKLLQVQVKQLEHLVSTTTISMAGVAGCLRTHDEILL). The chain crosses the membrane as a helical span at residues 225–245 (LGQRELIAVYGGVILFLFIYQ). The Extracellular portion of the chain corresponds to 246–265 (VMQCILIFYISNLEGFHSSN). The chain crosses the membrane as a helical span at residues 266-286 (DLVLIFCWLAPMLFYLILPLV). The Cytoplasmic portion of the chain corresponds to 287-348 (VNDIHNQANK…KSTLFKLFTA (62 aa)). A helical membrane pass occupies residues 349–368 (IFTYMVILVQFKEMENSTKS). I369 is a topological domain (extracellular).

This sequence belongs to the insect chemoreceptor superfamily. Gustatory receptor (GR) family. Gr21a subfamily. Expressed in the adult labellar chemosensory neurons. In larvae, is expressed in neurons of the terminal external chemosensory organ, as well as in the dorsal and posterior pharyngeal sense organs.

It localises to the cell membrane. In terms of biological role, gustatory receptor which mediates acceptance or avoidance behavior, depending on its substrates. Plays a role in sustaining courtship behavior in males, possibly through the reception of a stimulating arrestant pheromone. The chain is Gustatory and pheromone receptor 39a, isoform B (Gr39a) from Drosophila melanogaster (Fruit fly).